The sequence spans 235 residues: UPF0758 protein A1S_2918 (235 aa).

Residues 1–20 (MNTSIKNWPEQERPRERLLQ) form a disordered region. Over residues 9–18 (PEQERPRERL) the composition is skewed to basic and acidic residues. The MPN domain occupies 105-227 (SLHSSHLVLD…SFSFAEQQLL (123 aa)). Positions 176, 178, and 189 each coordinate Zn(2+). The JAMM motif signature appears at 176–189 (HNHPFGSPQPSPED).

Belongs to the UPF0758 family.

This chain is UPF0758 protein A1S_2918, found in Acinetobacter baumannii (strain ATCC 17978 / DSM 105126 / CIP 53.77 / LMG 1025 / NCDC KC755 / 5377).